Reading from the N-terminus, the 151-residue chain is MQQPRVESDIIGAGEGPQRAVPWSAWIIRQDWVRWWVCHIPRSWTQWWNTSGWRQPLQRMLWGLEGTLYLLLALMLCHALFTTGSYLLSSLWPVVAVMWSHLLPAILLLVLSALPALLFAASFLLLFSTLLSLVGLLTSMTQPGYAQDLDQ.

The next 3 membrane-spanning stretches (helical) occupy residues 61–81 (LWGL…HALF), 85–105 (SYLL…LLPA), and 116–138 (ALLF…GLLT).

It is found in the membrane. This Mus musculus (Mouse) protein is Transmembrane protein 239 (Tmem239).